Here is a 1298-residue protein sequence, read N- to C-terminus: Phosphoribosylformylglycinamidine synthase (1298 aa).

A disordered region spans residues 298–328 (TAIAPFPGASTGSGGEIRDEGATGRGAKPKA). ATP-binding positions include 305–316 (GASTGSGGEIRD), 384–386 (TGY), and A676. The Mg(2+) site is built by D677, E716, N720, and D884. S886 is a binding site for ATP. The 254-residue stretch at 1045–1298 (VAILREQGVN…MFRNARVWVD (254 aa)) folds into the Glutamine amidotransferase type-1 domain. C1138 (nucleophile) is an active-site residue. Active-site residues include H1263 and E1265.

This sequence in the N-terminal section; belongs to the FGAMS family. As to quaternary structure, monomer.

It is found in the cytoplasm. It catalyses the reaction N(2)-formyl-N(1)-(5-phospho-beta-D-ribosyl)glycinamide + L-glutamine + ATP + H2O = 2-formamido-N(1)-(5-O-phospho-beta-D-ribosyl)acetamidine + L-glutamate + ADP + phosphate + H(+). The protein operates within purine metabolism; IMP biosynthesis via de novo pathway; 5-amino-1-(5-phospho-D-ribosyl)imidazole from N(2)-formyl-N(1)-(5-phospho-D-ribosyl)glycinamide: step 1/2. Its function is as follows. Phosphoribosylformylglycinamidine synthase involved in the purines biosynthetic pathway. Catalyzes the ATP-dependent conversion of formylglycinamide ribonucleotide (FGAR) and glutamine to yield formylglycinamidine ribonucleotide (FGAM) and glutamate. This chain is Phosphoribosylformylglycinamidine synthase, found in Pseudomonas aeruginosa (strain ATCC 15692 / DSM 22644 / CIP 104116 / JCM 14847 / LMG 12228 / 1C / PRS 101 / PAO1).